The primary structure comprises 97 residues: Signal recognition particle 19 kDa protein (97 aa).

This sequence belongs to the SRP19 family. In terms of assembly, part of the signal recognition particle protein translocation system, which is composed of SRP and FtsY. Archaeal SRP consists of a 7S RNA molecule of 300 nucleotides and two protein subunits: SRP54 and SRP19.

It localises to the cytoplasm. Its function is as follows. Involved in targeting and insertion of nascent membrane proteins into the cytoplasmic membrane. Binds directly to 7S RNA and mediates binding of the 54 kDa subunit of the SRP. This chain is Signal recognition particle 19 kDa protein, found in Methanocella arvoryzae (strain DSM 22066 / NBRC 105507 / MRE50).